Reading from the N-terminus, the 263-residue chain is Protein phosphatase type 2A regulatory subunit RTS3 (263 aa).

2 disordered regions span residues 1-62 (MIAT…AQRR) and 149-176 (LPLTPKDSMTHISHSARRSSRNASISNG). A compositionally biased stretch (low complexity) spans 46–61 (LSTSSSPSSSPMSAQR). Ser172, Ser192, Ser214, and Ser238 each carry phosphoserine.

The protein resides in the cytoplasm. Its subcellular location is the nucleus. In terms of biological role, may be a component of a protein phosphatase type 2A (PP2A) complex. Negatively regulates SIT4 phosphatase, a modulators of caffeine sensitivity. The sequence is that of Protein phosphatase type 2A regulatory subunit RTS3 (RTS3) from Saccharomyces cerevisiae (strain ATCC 204508 / S288c) (Baker's yeast).